Reading from the N-terminus, the 253-residue chain is Transmembrane protein 51 (253 aa).

2 helical membrane-spanning segments follow: residues 17 to 37 (IGLG…VPGF) and 65 to 85 (VAYV…CLSI). 2 disordered regions span residues 93 to 133 (QGED…YVPS) and 164 to 253 (LTGL…RPPD). A compositionally biased stretch (acidic residues) spans 113-124 (EDSQEEEEEDEE). Serine 115 carries the phosphoserine modification. Over residues 164 to 176 (LTGLDETTPTSTR) the composition is skewed to polar residues. 2 positions are modified to phosphoserine: serine 182 and serine 192. The segment covering 194–205 (LAKRLKPLKVRR) has biased composition (basic residues). Basic and acidic residues predominate over residues 206–217 (IKSEKLHLKDFR). A compositionally biased stretch (pro residues) spans 224–238 (NVPPPSIEPLTPPPQ). Residues 242–253 (VQEKAPDTRPPD) are compositionally biased toward basic and acidic residues.

The protein localises to the membrane. The protein is Transmembrane protein 51 (TMEM51) of Homo sapiens (Human).